A 275-amino-acid polypeptide reads, in one-letter code: 2,3,4,5-tetrahydropyridine-2,6-dicarboxylate N-succinyltransferase (275 aa).

This sequence belongs to the transferase hexapeptide repeat family.

It is found in the cytoplasm. The enzyme catalyses (S)-2,3,4,5-tetrahydrodipicolinate + succinyl-CoA + H2O = (S)-2-succinylamino-6-oxoheptanedioate + CoA. The protein operates within amino-acid biosynthesis; L-lysine biosynthesis via DAP pathway; LL-2,6-diaminopimelate from (S)-tetrahydrodipicolinate (succinylase route): step 1/3. The protein is 2,3,4,5-tetrahydropyridine-2,6-dicarboxylate N-succinyltransferase of Paraburkholderia phytofirmans (strain DSM 17436 / LMG 22146 / PsJN) (Burkholderia phytofirmans).